The sequence spans 209 residues: Mitochondrial import inner membrane translocase subunit Tim23 (209 aa).

The next 3 membrane-spanning stretches (helical) occupy residues 73-93 (FELA…FGAM), 125-145 (ALWA…GVII), and 172-194 (GGLR…YALY).

The protein belongs to the Tim17/Tim22/Tim23 family. Component of the TIM23 complex at least composed of TIMM23, TIMM17 (TIMM17A or TIMM17B) and TIMM50; within this complex, directly interacts with TIMM50. The complex interacts with the TIMM44 component of the PAM complex and with DNAJC15. Upon mitochondrial depolarization, interacts with PINK1; the interaction is required for PINK1 accumulation at the outer mitochondrial membrane, kinase activation by autophosphorylation and PRKN recruitement to mitochondria.

It is found in the mitochondrion inner membrane. Its function is as follows. Essential component of the TIM23 complex, a complex that mediates the translocation of transit peptide-containing proteins across the mitochondrial inner membrane. Has a role in the activation of stress-induced mitophagy by protecting PINK1 from OMA1-mediated degradation and facilitating its accumulation at the outer mitochondrial membrane in response to depolarization. This Pongo abelii (Sumatran orangutan) protein is Mitochondrial import inner membrane translocase subunit Tim23 (TIMM23).